The primary structure comprises 170 residues: Acetyl-CoA decarbonylase/synthase complex subunit epsilon 2 (170 aa).

This sequence belongs to the CdhB family. As to quaternary structure, heterotetramer of two alpha and two epsilon subunits. The ACDS complex is made up of alpha, epsilon, beta, gamma and delta subunits with a probable stoichiometry of (alpha(2)epsilon(2))(4)-beta(8)-(gamma(1)delta(1))(8).

Its pathway is one-carbon metabolism; methanogenesis from acetate. Part of a complex that catalyzes the reversible cleavage of acetyl-CoA, allowing growth on acetate as sole source of carbon and energy. The alpha-epsilon subcomponent functions as a carbon monoxide dehydrogenase. The precise role of the epsilon subunit is unclear; it may have a stabilizing role within the alpha(2)epsilon(2) component and/or be involved in electron transfer to FAD during a potential FAD-mediated CO oxidation. This Methanosarcina thermophila protein is Acetyl-CoA decarbonylase/synthase complex subunit epsilon 2 (cdhB2).